Consider the following 396-residue polypeptide: Obg-like ATPase 1 (396 aa).

The OBG-type G domain occupies 23–283; the sequence is LKIGIVGLPN…LSAEERQKYL (261 aa). 32 to 37 serves as a coordination point for ATP; it reads NVGKST. Residues Ser36 and Thr56 each contribute to the Mg(2+) site. Leu231 contributes to the ATP binding site. The short motif at 267 to 274 is the Nuclear export signal element; that stretch reads LELRLQEL. Lys294 is subject to N6-acetyllysine. The region spanning 304–387 is the TGS domain; it reads QLEYFFTAGP…EDGDIIFFKF (84 aa).

Belongs to the TRAFAC class OBG-HflX-like GTPase superfamily. OBG GTPase family. YchF/OLA1 subfamily. As to quaternary structure, monomer. It depends on Mg(2+) as a cofactor.

The protein resides in the cytoplasm. Its subcellular location is the nucleus. The protein localises to the nucleolus. Functionally, hydrolyzes ATP, and can also hydrolyze GTP with lower efficiency. Has lower affinity for GTP. The chain is Obg-like ATPase 1 from Bos taurus (Bovine).